The primary structure comprises 389 residues: 8-amino-7-oxononanoate synthase 2 (389 aa).

Arginine 21 serves as a coordination point for substrate. 108–109 (GY) serves as a coordination point for pyridoxal 5'-phosphate. Histidine 133 serves as a coordination point for substrate. Residues serine 180, 205–208 (DDAH), and 234–237 (TLSK) each bind pyridoxal 5'-phosphate. Lysine 237 bears the N6-(pyridoxal phosphate)lysine mark. Threonine 351 lines the substrate pocket.

This sequence belongs to the class-II pyridoxal-phosphate-dependent aminotransferase family. BioF subfamily. As to quaternary structure, homodimer. The cofactor is pyridoxal 5'-phosphate.

The catalysed reaction is 6-carboxyhexanoyl-[ACP] + L-alanine + H(+) = (8S)-8-amino-7-oxononanoate + holo-[ACP] + CO2. Its pathway is cofactor biosynthesis; biotin biosynthesis. Catalyzes the decarboxylative condensation of pimeloyl-[acyl-carrier protein] and L-alanine to produce 8-amino-7-oxononanoate (AON), [acyl-carrier protein], and carbon dioxide. This Bacillus subtilis (strain 168) protein is 8-amino-7-oxononanoate synthase 2 (bioF).